Reading from the N-terminus, the 62-residue chain is uncharacterized protein (62 aa).

The interval 1 to 62 (MTSTQNLKDK…PPKKSLSQLP (62 aa)) is disordered. A compositionally biased stretch (basic and acidic residues) spans 7 to 29 (LKDKFEEEIRQQKEGKGKKEKVW). Positions 32-43 (HSDSSYNKQTAV) are enriched in polar residues.

This is an uncharacterized protein from Dictyostelium discoideum (Social amoeba).